The chain runs to 381 residues: Alkanesulfonate monooxygenase (381 aa).

Belongs to the SsuD family. Homotetramer.

The enzyme catalyses an alkanesulfonate + FMNH2 + O2 = an aldehyde + FMN + sulfite + H2O + 2 H(+). Its function is as follows. Catalyzes the desulfonation of aliphatic sulfonates. The polypeptide is Alkanesulfonate monooxygenase (Cronobacter sakazakii (strain ATCC BAA-894) (Enterobacter sakazakii)).